Reading from the N-terminus, the 146-residue chain is Large ribosomal subunit protein uL15 (146 aa).

Over residues 1-13 (MKLHELRPAEGSK) the composition is skewed to basic and acidic residues. A disordered region spans residues 1–54 (MKLHELRPAEGSKKAPKRVGRGNGSGLGKTAGKGHKGQNARSGGGVRPGFEGGQ). 2 stretches are compositionally biased toward gly residues: residues 21-31 (RGNGSGLGKTA) and 42-52 (SGGGVRPGFEG).

The protein belongs to the universal ribosomal protein uL15 family. Part of the 50S ribosomal subunit.

Functionally, binds to the 23S rRNA. The protein is Large ribosomal subunit protein uL15 of Clostridium novyi (strain NT).